A 258-amino-acid polypeptide reads, in one-letter code: Membrane-associated protein Vipp1 (258 aa).

The disordered stretch occupies residues 217–258 (MLPPATPVTQAQLPPQQETTPAKSNEVVDAELDSLRKQLDQL). Residues 223–239 (PVTQAQLPPQQETTPAK) are compositionally biased toward polar residues. The segment covering 249–258 (DSLRKQLDQL) has biased composition (basic and acidic residues).

This sequence belongs to the PspA/Vipp/IM30 family. In terms of assembly, polymerizes to form rings, filaments and ribbons. Rings are formed by stacked rungs that tilt to give a dome-shaped curvature. Rings form with symmetries ranging from C11 (55 subunits) to C17 (119 subunits).

It localises to the cell inner membrane. Its function is as follows. A membrane remodeling protein capable of forming rings and/or filaments on membranes, which then curve and tubulate the bilayer. Rings will form on liposomes, altering their positive curvature so the lipid bilayer is remodeled into a negative curve as the membrane enters the ring. Ring stacks of varying lengths can be seen joining isolated liposomes. A lipid monolayer can be drawn into the center of the rings. Required for thylakoid formation. This is Membrane-associated protein Vipp1 from Nostoc punctiforme (strain ATCC 29133 / PCC 73102).